Reading from the N-terminus, the 269-residue chain is 5'-nucleotidase SurE (269 aa).

Asp11, Asp12, Ser43, and Asn101 together coordinate a divalent metal cation.

This sequence belongs to the SurE nucleotidase family. A divalent metal cation serves as cofactor.

It localises to the cytoplasm. It catalyses the reaction a ribonucleoside 5'-phosphate + H2O = a ribonucleoside + phosphate. Its function is as follows. Nucleotidase that shows phosphatase activity on nucleoside 5'-monophosphates. This chain is 5'-nucleotidase SurE, found in Prochlorococcus marinus subsp. pastoris (strain CCMP1986 / NIES-2087 / MED4).